Reading from the N-terminus, the 176-residue chain is Ribose 1,5-bisphosphate phosphokinase PhnN (176 aa).

Residue 10–17 participates in ATP binding; the sequence is GPSGAGKD.

The protein belongs to the ribose 1,5-bisphosphokinase family.

The catalysed reaction is alpha-D-ribose 1,5-bisphosphate + ATP = 5-phospho-alpha-D-ribose 1-diphosphate + ADP. It participates in metabolic intermediate biosynthesis; 5-phospho-alpha-D-ribose 1-diphosphate biosynthesis; 5-phospho-alpha-D-ribose 1-diphosphate from D-ribose 5-phosphate (route II): step 3/3. Its function is as follows. Catalyzes the phosphorylation of ribose 1,5-bisphosphate to 5-phospho-D-ribosyl alpha-1-diphosphate (PRPP). In Methylobacterium radiotolerans (strain ATCC 27329 / DSM 1819 / JCM 2831 / NBRC 15690 / NCIMB 10815 / 0-1), this protein is Ribose 1,5-bisphosphate phosphokinase PhnN.